A 367-amino-acid polypeptide reads, in one-letter code: Germination protease (367 aa).

Positions 1–15 (MKEPLDLSKYSVRTD) are excised as a propeptide.

The protein belongs to the peptidase A25 family. Homotetramer. In terms of processing, autoproteolytically processed. The inactive tetrameric zymogen termed p46 autoprocesses to a smaller form termed p41, which is active only during spore germination.

It catalyses the reaction Endopeptidase action with P4 Glu or Asp, P1 preferably Glu &gt; Asp, P1' hydrophobic and P2' Ala.. Initiates the rapid degradation of small, acid-soluble proteins during spore germination. The chain is Germination protease from Bacillus thuringiensis subsp. konkukian (strain 97-27).